A 276-amino-acid polypeptide reads, in one-letter code: NH(3)-dependent NAD(+) synthetase (276 aa).

47–54 lines the ATP pocket; the sequence is GISGGQDS. Aspartate 53 lines the Mg(2+) pocket. Arginine 141 is a deamido-NAD(+) binding site. An ATP-binding site is contributed by threonine 161. Glutamate 166 serves as a coordination point for Mg(2+). Lysine 174 and aspartate 181 together coordinate deamido-NAD(+). Residues lysine 190 and threonine 212 each coordinate ATP. Position 261–262 (261–262) interacts with deamido-NAD(+); it reads HK.

The protein belongs to the NAD synthetase family. Homodimer.

The catalysed reaction is deamido-NAD(+) + NH4(+) + ATP = AMP + diphosphate + NAD(+) + H(+). It functions in the pathway cofactor biosynthesis; NAD(+) biosynthesis; NAD(+) from deamido-NAD(+) (ammonia route): step 1/1. Catalyzes the ATP-dependent amidation of deamido-NAD to form NAD. Uses ammonia as a nitrogen source. The chain is NH(3)-dependent NAD(+) synthetase from Levilactobacillus brevis (strain ATCC 367 / BCRC 12310 / CIP 105137 / JCM 1170 / LMG 11437 / NCIMB 947 / NCTC 947) (Lactobacillus brevis).